A 443-amino-acid chain; its full sequence is Glucose-6-phosphate isomerase (443 aa).

The active-site Proton donor is E285. Catalysis depends on residues H306 and K420.

The protein belongs to the GPI family.

It localises to the cytoplasm. It catalyses the reaction alpha-D-glucose 6-phosphate = beta-D-fructose 6-phosphate. Its pathway is carbohydrate biosynthesis; gluconeogenesis. It functions in the pathway carbohydrate degradation; glycolysis; D-glyceraldehyde 3-phosphate and glycerone phosphate from D-glucose: step 2/4. In terms of biological role, catalyzes the reversible isomerization of glucose-6-phosphate to fructose-6-phosphate. The chain is Glucose-6-phosphate isomerase from Staphylococcus saprophyticus subsp. saprophyticus (strain ATCC 15305 / DSM 20229 / NCIMB 8711 / NCTC 7292 / S-41).